Here is a 264-residue protein sequence, read N- to C-terminus: S-adenosylmethionine decarboxylase proenzyme (264 aa).

The Schiff-base intermediate with substrate; via pyruvic acid role is filled by serine 112. Position 112 is a pyruvic acid (Ser); by autocatalysis (serine 112). Residue histidine 117 is the Proton acceptor; for processing activity of the active site. The Proton donor; for catalytic activity role is filled by cysteine 140.

It belongs to the prokaryotic AdoMetDC family. Type 2 subfamily. In terms of assembly, heterooctamer of four alpha and four beta chains arranged as a tetramer of alpha/beta heterodimers. Pyruvate serves as cofactor. Is synthesized initially as an inactive proenzyme. Formation of the active enzyme involves a self-maturation process in which the active site pyruvoyl group is generated from an internal serine residue via an autocatalytic post-translational modification. Two non-identical subunits are generated from the proenzyme in this reaction, and the pyruvate is formed at the N-terminus of the alpha chain, which is derived from the carboxyl end of the proenzyme. The post-translation cleavage follows an unusual pathway, termed non-hydrolytic serinolysis, in which the side chain hydroxyl group of the serine supplies its oxygen atom to form the C-terminus of the beta chain, while the remainder of the serine residue undergoes an oxidative deamination to produce ammonia and the pyruvoyl group blocking the N-terminus of the alpha chain.

It catalyses the reaction S-adenosyl-L-methionine + H(+) = S-adenosyl 3-(methylsulfanyl)propylamine + CO2. Its pathway is amine and polyamine biosynthesis; S-adenosylmethioninamine biosynthesis; S-adenosylmethioninamine from S-adenosyl-L-methionine: step 1/1. In terms of biological role, catalyzes the decarboxylation of S-adenosylmethionine to S-adenosylmethioninamine (dcAdoMet), the propylamine donor required for the synthesis of the polyamines spermine and spermidine from the diamine putrescine. The chain is S-adenosylmethionine decarboxylase proenzyme from Enterobacter sp. (strain 638).